Here is a 198-residue protein sequence, read N- to C-terminus: HTH-type transcriptional regulator BetI (198 aa).

Residues 8–68 (KIRRPQLVSA…ETMRDILRQL (61 aa)) enclose the HTH tetR-type domain. A DNA-binding region (H-T-H motif) is located at residues 31 to 50 (SVSLISQEAGVSSGIINHYF).

It functions in the pathway amine and polyamine biosynthesis; betaine biosynthesis via choline pathway [regulation]. Functionally, repressor involved in the biosynthesis of the osmoprotectant glycine betaine. It represses transcription of the choline transporter BetT and the genes of BetAB involved in the synthesis of glycine betaine. The polypeptide is HTH-type transcriptional regulator BetI (Vibrio vulnificus (strain YJ016)).